A 523-amino-acid chain; its full sequence is Lysine--tRNA ligase (523 aa).

The short motif at proline 30–asparagine 38 is the 'HIGH' region element. Zn(2+)-binding residues include aspartate 95, cysteine 99, histidine 100, histidine 106, cysteine 177, histidine 180, cysteine 199, and histidine 203. The 'KMSKS' region motif lies at lysine 279–serine 283.

Belongs to the class-I aminoacyl-tRNA synthetase family. The cofactor is Zn(2+).

It localises to the cytoplasm. It catalyses the reaction tRNA(Lys) + L-lysine + ATP = L-lysyl-tRNA(Lys) + AMP + diphosphate. In Pyrococcus furiosus (strain ATCC 43587 / DSM 3638 / JCM 8422 / Vc1), this protein is Lysine--tRNA ligase (lysS).